The sequence spans 125 residues: MARLAGVDIPREKRLEIALTYIYGVGKTRAHETLAATGISADVRVKDLTDAQLVELRDYIEGNYKVEGDLRREVAADIRRKVEIGSYEGLRHRKGLPVRGQRTKTNARTRKGPKRTVAGKKKAGR.

Residues 93-125 (RKGLPVRGQRTKTNARTRKGPKRTVAGKKKAGR) are disordered.

It belongs to the universal ribosomal protein uS13 family. Part of the 30S ribosomal subunit. Forms a loose heterodimer with protein S19. Forms two bridges to the 50S subunit in the 70S ribosome.

Its function is as follows. Located at the top of the head of the 30S subunit, it contacts several helices of the 16S rRNA. In the 70S ribosome it contacts the 23S rRNA (bridge B1a) and protein L5 of the 50S subunit (bridge B1b), connecting the 2 subunits; these bridges are implicated in subunit movement. Contacts the tRNAs in the A and P-sites. The sequence is that of Small ribosomal subunit protein uS13 from Arthrobacter sp. (strain FB24).